Reading from the N-terminus, the 856-residue chain is Rod cGMP-specific 3',5'-cyclic phosphodiesterase subunit beta (856 aa).

Serine 2 carries the N-acetylserine modification. GAF domains follow at residues 71–220 and 252–429; these read NMER…TLNL and DIER…GWSV. The PDEase domain maps to 481–814; it reads EEDELGKILK…KEWKALADEY (334 aa). The active-site Proton donor is histidine 557. The a divalent metal cation site is built by histidine 561, histidine 597, aspartate 598, and aspartate 718. Cysteine 853 is lipidated: S-geranylgeranyl cysteine. The propeptide at 854 to 856 is removed in mature form; that stretch reads CIL.

The protein belongs to the cyclic nucleotide phosphodiesterase family. Oligomer composed of two catalytic chains (alpha and beta), an inhibitory chain (gamma) and the delta chain. It depends on a divalent metal cation as a cofactor.

It localises to the membrane. The protein resides in the cell projection. The protein localises to the cilium. Its subcellular location is the photoreceptor outer segment. The catalysed reaction is 3',5'-cyclic GMP + H2O = GMP + H(+). In terms of biological role, rod-specific cGMP phosphodiesterase that catalyzes the hydrolysis of 3',5'-cyclic GMP. Necessary for the formation of a functional phosphodiesterase holoenzyme. Involved in retinal circadian rhythm photoentrainment via modulation of UVA and orange light-induced phase-shift of the retina clock. May participate in processes of transmission and amplification of the visual signal. The chain is Rod cGMP-specific 3',5'-cyclic phosphodiesterase subunit beta from Mus musculus (Mouse).